A 285-amino-acid polypeptide reads, in one-letter code: Bifunctional protein FolD (285 aa).

NADP(+)-binding positions include 165 to 167 (GRS) and Ser190.

Belongs to the tetrahydrofolate dehydrogenase/cyclohydrolase family. In terms of assembly, homodimer.

It carries out the reaction (6R)-5,10-methylene-5,6,7,8-tetrahydrofolate + NADP(+) = (6R)-5,10-methenyltetrahydrofolate + NADPH. It catalyses the reaction (6R)-5,10-methenyltetrahydrofolate + H2O = (6R)-10-formyltetrahydrofolate + H(+). The protein operates within one-carbon metabolism; tetrahydrofolate interconversion. Catalyzes the oxidation of 5,10-methylenetetrahydrofolate to 5,10-methenyltetrahydrofolate and then the hydrolysis of 5,10-methenyltetrahydrofolate to 10-formyltetrahydrofolate. This Burkholderia mallei (strain NCTC 10247) protein is Bifunctional protein FolD.